A 265-amino-acid polypeptide reads, in one-letter code: Type III pantothenate kinase (265 aa).

6–13 (DVGNTHTV) is an ATP binding site. 112–115 (GADR) contacts substrate. Asp114 functions as the Proton acceptor in the catalytic mechanism. Asp134 lines the K(+) pocket. Residue Thr137 participates in ATP binding. Thr189 serves as a coordination point for substrate.

Belongs to the type III pantothenate kinase family. Homodimer. NH4(+) is required as a cofactor. K(+) serves as cofactor.

The protein localises to the cytoplasm. The catalysed reaction is (R)-pantothenate + ATP = (R)-4'-phosphopantothenate + ADP + H(+). It functions in the pathway cofactor biosynthesis; coenzyme A biosynthesis; CoA from (R)-pantothenate: step 1/5. Catalyzes the phosphorylation of pantothenate (Pan), the first step in CoA biosynthesis. The chain is Type III pantothenate kinase from Streptomyces avermitilis (strain ATCC 31267 / DSM 46492 / JCM 5070 / NBRC 14893 / NCIMB 12804 / NRRL 8165 / MA-4680).